Here is a 227-residue protein sequence, read N- to C-terminus: Octanoyltransferase (227 aa).

Residues glutamate 35–lysine 222 form the BPL/LPL catalytic domain. Substrate contacts are provided by residues arginine 80 to histidine 87, alanine 152 to glycine 154, and glycine 165 to alanine 167. Cysteine 183 serves as the catalytic Acyl-thioester intermediate.

The protein belongs to the LipB family.

It is found in the cytoplasm. It catalyses the reaction octanoyl-[ACP] + L-lysyl-[protein] = N(6)-octanoyl-L-lysyl-[protein] + holo-[ACP] + H(+). Its pathway is protein modification; protein lipoylation via endogenous pathway; protein N(6)-(lipoyl)lysine from octanoyl-[acyl-carrier-protein]: step 1/2. Catalyzes the transfer of endogenously produced octanoic acid from octanoyl-acyl-carrier-protein onto the lipoyl domains of lipoate-dependent enzymes. Lipoyl-ACP can also act as a substrate although octanoyl-ACP is likely to be the physiological substrate. The polypeptide is Octanoyltransferase (Bacteroides thetaiotaomicron (strain ATCC 29148 / DSM 2079 / JCM 5827 / CCUG 10774 / NCTC 10582 / VPI-5482 / E50)).